The following is a 611-amino-acid chain: Creatine transporter (611 aa).

A helical transmembrane segment spans residues 45–65; it reads FIMSCVGFAVGLGNVWRFPYL. Residues 66 to 71 lie on the Extracellular side of the membrane; it reads CYKNGG. The chain crosses the membrane as a helical span at residues 72–92; it reads GVFLIPYLLVAVFGGIPIFFL. Residues 93-122 lie on the Cytoplasmic side of the membrane; sequence EISLGQFMKAGGINAWNIAPLFKGLGYASM. Residues 123 to 143 traverse the membrane as a helical segment; it reads VIVFFCNTYYILVLTWSSFYL. Residues 144 to 207 are Extracellular-facing; sequence VQSFSSPLPW…LSSGLGDVGE (64 aa). N-linked (GlcNAc...) asparagine glycosylation is found at N157 and N171. A helical membrane pass occupies residues 208–228; that stretch reads IGWELTLCLTATWMLVYFCIW. Over 229–246 the chain is Cytoplasmic; sequence KGVKTSGKVVYVTATFPY. A helical membrane pass occupies residues 247–267; sequence IILVILLVRGVTLHGAVQGIV. Residues 268–281 lie on the Extracellular side of the membrane; the sequence is YYLQPDWGKLGEAQ. Residues 282–302 traverse the membrane as a helical segment; sequence VWIDAGTQIFFSYAIGLGTLT. The Cytoplasmic segment spans residues 303 to 318; the sequence is ALGSYNQLHNDCYKDA. The chain crosses the membrane as a helical span at residues 319-339; the sequence is FILSLVNSATSFFAGLVVFSI. At 340–371 the chain is on the extracellular side; that stretch reads LGFMAVEEGVDISVVAESGPGLAFIAYPKAVT. A helical transmembrane segment spans residues 372-392; that stretch reads LMPFPQVWAVLFFIMLLCLGL. At 393 to 421 the chain is on the cytoplasmic side; it reads GSQFVGVEGFVTAILDLWPSKFSFRYLRE. Residues 422 to 442 form a helical membrane-spanning segment; sequence VVVAMVICLSFLIDLSMITEG. Residues 443–456 are Extracellular-facing; sequence GMYIFQIFDYYSAS. Residues 457–477 traverse the membrane as a helical segment; sequence GTTLLWTAFWECVAVAWVYGG. Topologically, residues 478 to 497 are cytoplasmic; the sequence is DRYLDDLAWMLGYRPWALVK. Residues 498-518 traverse the membrane as a helical segment; it reads WCWSVITPLVCMGIFTFHLVN. The Extracellular segment spans residues 519 to 537; it reads YKPLTYNKTYTYPWWGEAI. An N-linked (GlcNAc...) asparagine glycan is attached at N525. Residues 538–558 form a helical membrane-spanning segment; the sequence is GWCLALASMLCVPTTVLYSLS. At 559-611 the chain is on the cytoplasmic side; that stretch reads RGRGSLKERWRKLTTPVWASHHLAYKMAGAKINQPCEGVVSCEEKVVIFESVL.

It belongs to the sodium:neurotransmitter symporter (SNF) (TC 2.A.22) family.

It is found in the membrane. Functionally, required for the uptake of creatine. The protein is Creatine transporter of Torpedo marmorata (Marbled electric ray).